The chain runs to 466 residues: ATP synthase subunit beta (466 aa).

ATP is bound at residue 155–162 (GGAGVGKT).

This sequence belongs to the ATPase alpha/beta chains family. As to quaternary structure, F-type ATPases have 2 components, CF(1) - the catalytic core - and CF(0) - the membrane proton channel. CF(1) has five subunits: alpha(3), beta(3), gamma(1), delta(1), epsilon(1). CF(0) has three main subunits: a(1), b(2) and c(9-12). The alpha and beta chains form an alternating ring which encloses part of the gamma chain. CF(1) is attached to CF(0) by a central stalk formed by the gamma and epsilon chains, while a peripheral stalk is formed by the delta and b chains.

Its subcellular location is the cell inner membrane. It catalyses the reaction ATP + H2O + 4 H(+)(in) = ADP + phosphate + 5 H(+)(out). Functionally, produces ATP from ADP in the presence of a proton gradient across the membrane. The catalytic sites are hosted primarily by the beta subunits. This chain is ATP synthase subunit beta, found in Bordetella bronchiseptica (strain ATCC BAA-588 / NCTC 13252 / RB50) (Alcaligenes bronchisepticus).